Reading from the N-terminus, the 43-residue chain is Putative inhibitor of glucose uptake transporter SgrT (43 aa).

Functionally, acts to promote recovery from glucose-phosphate stress due to intracellular accumulation of glucose-6-phosphate caused by disruption of glycolytic flux or in the presence of (toxic) non-metabolizable glucose phosphate analogs. It may do so by inhibiting the transporter activity for glucose uptake (PtsG) as cells that overexpress this protein do not seem to import glucose although they have nearly wild-type levels of PtsG. This is Putative inhibitor of glucose uptake transporter SgrT (sgrT) from Escherichia coli (strain K12).